Reading from the N-terminus, the 191-residue chain is Putative manganese efflux pump MntP (191 aa).

6 consecutive transmembrane segments (helical) span residues 3–23 (PISI…AAIG), 37–57 (LRAG…GWLL), 65–85 (VEAF…IHMI), 107–129 (WKLA…GLAF), 144–164 (CTLT…SMVG), and 169–189 (IIGG…HLHG).

It belongs to the MntP (TC 9.B.29) family.

The protein resides in the cell inner membrane. Its function is as follows. Probably functions as a manganese efflux pump. The polypeptide is Putative manganese efflux pump MntP (Stenotrophomonas maltophilia (strain R551-3)).